The sequence spans 450 residues: Plasminogen-binding protein PgbA (450 aa).

Composition is skewed to basic and acidic residues over residues 262-273 (EIKQEAIKEPKK), 284-310 (LEEK…DERK), and 317-362 (KAME…REIN). Residues 262–450 (EIKQEAIKEP…RRKALEMNKK (189 aa)) form a disordered region. The segment covering 363–386 (QESANEPSSENNATLKDTENTSVL) has biased composition (polar residues). A compositionally biased stretch (basic and acidic residues) spans 389–450 (SAAKKEAPKP…RRKALEMNKK (62 aa)).

Its subcellular location is the cell surface. Its function is as follows. Binds plasminogen, specifically, and in a concentration and lysine-dependent manner. Plasminogen is the precursor of plasmin, a serine protease that cleaves fibrin, fibronectin, laminin and vitronectin. Acquisition of plasminogen/plasmin could enable H.pylori to degrade host components. The protein is Plasminogen-binding protein PgbA (pgbA) of Helicobacter pylori (strain J99 / ATCC 700824) (Campylobacter pylori J99).